A 92-amino-acid chain; its full sequence is UPF0250 protein PD_0532 (92 aa).

Belongs to the UPF0250 family.

This Xylella fastidiosa (strain Temecula1 / ATCC 700964) protein is UPF0250 protein PD_0532.